Reading from the N-terminus, the 147-residue chain is Endoribonuclease YbeY (147 aa).

3 residues coordinate Zn(2+): histidine 109, histidine 113, and histidine 119.

Belongs to the endoribonuclease YbeY family. Zn(2+) is required as a cofactor.

It localises to the cytoplasm. In terms of biological role, single strand-specific metallo-endoribonuclease involved in late-stage 70S ribosome quality control and in maturation of the 3' terminus of the 16S rRNA. The chain is Endoribonuclease YbeY from Magnetococcus marinus (strain ATCC BAA-1437 / JCM 17883 / MC-1).